A 395-amino-acid polypeptide reads, in one-letter code: MAWRQLKKRAQDAMVILGGGGLLFASYLTATGDEHFYAELLMPSLQRLLDPETAHRLAVRFTSLGLLPRTTFQDSDMLEVRVLGHKFRNPVGIAAGFDKHGEAVDGLYKMGFGFVEIGSVTPEPQEGNPRPRVFRLPEDQAIINRYGFNSHGLSVVEHRLRARQQTQARLTEDGLPLGINLGKNKTSVDAASDYAEGVRVLGPLADYLVVNVSSPNTAGLRSLQGKAELRRLLTKVLQERDALKVAHKPAVLVKIAPDLTAQDKEDIASVVRELGIDGLIVTNSTVSRPASLQGALRSEPGGLSGKPLRDLSTQTIREMYALTQGRVPIVGVGGVSSGQDALEKIRAGASLVQLYTALTYRGPPVVGGVKRELEALLKEQGFARVTDAIGADHRR.

Residues 1–10 (MAWRQLKKRA) constitute a mitochondrion; not cleaved transit peptide. The Mitochondrial matrix portion of the chain corresponds to 1–10 (MAWRQLKKRA). The chain crosses the membrane as a helical span at residues 11 to 30 (QDAMVILGGGGLLFASYLTA). Residues 31–395 (TGDEHFYAEL…TDAIGADHRR (365 aa)) lie on the Mitochondrial intermembrane side of the membrane. FMN-binding positions include 95-99 (AGFDK) and serine 119. Substrate is bound at residue lysine 99. Substrate is bound at residue 144–148 (NRYGF). Residues asparagine 180 and asparagine 211 each coordinate FMN. Residue 211 to 216 (NVSSPN) coordinates substrate. Serine 214 functions as the Nucleophile in the catalytic mechanism. Residues lysine 254 and threonine 282 each contribute to the FMN site. 283–284 (NS) contributes to the substrate binding site. Residues glycine 305, glycine 334, and 355 to 356 (YT) contribute to the FMN site.

This sequence belongs to the dihydroorotate dehydrogenase family. Type 2 subfamily. As to quaternary structure, monomer. FMN serves as cofactor. Post-translationally, the uncleaved transit peptide is required for mitochondrial targeting and proper membrane integration.

It is found in the mitochondrion inner membrane. It catalyses the reaction (S)-dihydroorotate + a quinone = orotate + a quinol. It participates in pyrimidine metabolism; UMP biosynthesis via de novo pathway; orotate from (S)-dihydroorotate (quinone route): step 1/1. Its function is as follows. Catalyzes the conversion of dihydroorotate to orotate with quinone as electron acceptor. Required for UMP biosynthesis via de novo pathway. The polypeptide is Dihydroorotate dehydrogenase (quinone), mitochondrial (DHODH) (Bos taurus (Bovine)).